The sequence spans 502 residues: L-arabinose isomerase (502 aa).

Residues Glu306, Glu333, His350, and His449 each coordinate Mn(2+).

This sequence belongs to the arabinose isomerase family. Mn(2+) is required as a cofactor.

It catalyses the reaction beta-L-arabinopyranose = L-ribulose. The protein operates within carbohydrate degradation; L-arabinose degradation via L-ribulose; D-xylulose 5-phosphate from L-arabinose (bacterial route): step 1/3. Functionally, catalyzes the conversion of L-arabinose to L-ribulose. This is L-arabinose isomerase from Flavobacterium johnsoniae (strain ATCC 17061 / DSM 2064 / JCM 8514 / BCRC 14874 / CCUG 350202 / NBRC 14942 / NCIMB 11054 / UW101) (Cytophaga johnsonae).